The sequence spans 315 residues: Transaldolase (315 aa).

Residue lysine 131 is the Schiff-base intermediate with substrate of the active site.

It belongs to the transaldolase family. Type 1 subfamily. Homodimer.

It localises to the cytoplasm. It catalyses the reaction D-sedoheptulose 7-phosphate + D-glyceraldehyde 3-phosphate = D-erythrose 4-phosphate + beta-D-fructose 6-phosphate. Its pathway is carbohydrate degradation; pentose phosphate pathway; D-glyceraldehyde 3-phosphate and beta-D-fructose 6-phosphate from D-ribose 5-phosphate and D-xylulose 5-phosphate (non-oxidative stage): step 2/3. In terms of biological role, transaldolase is important for the balance of metabolites in the pentose-phosphate pathway. The chain is Transaldolase from Actinobacillus pleuropneumoniae serotype 5b (strain L20).